Consider the following 370-residue polypeptide: tRNA-specific 2-thiouridylase MnmA (370 aa).

ATP-binding positions include 19–26 (AMSGGVDS) and leucine 45. Cysteine 113 (nucleophile) is an active-site residue. Cysteine 113 and cysteine 209 are disulfide-bonded. ATP is bound at residue glycine 137. The segment at 159–161 (RDQ) is interaction with tRNA. Catalysis depends on cysteine 209, which acts as the Cysteine persulfide intermediate.

It belongs to the MnmA/TRMU family.

The protein localises to the cytoplasm. The catalysed reaction is S-sulfanyl-L-cysteinyl-[protein] + uridine(34) in tRNA + AH2 + ATP = 2-thiouridine(34) in tRNA + L-cysteinyl-[protein] + A + AMP + diphosphate + H(+). Its function is as follows. Catalyzes the 2-thiolation of uridine at the wobble position (U34) of tRNA, leading to the formation of s(2)U34. In Zymomonas mobilis subsp. mobilis (strain ATCC 31821 / ZM4 / CP4), this protein is tRNA-specific 2-thiouridylase MnmA.